Reading from the N-terminus, the 439-residue chain is Xylose isomerase (439 aa).

Residues histidine 103 and aspartate 106 contribute to the active site. 7 residues coordinate Mg(2+): glutamate 234, glutamate 270, histidine 273, aspartate 298, aspartate 309, aspartate 311, and aspartate 341.

Belongs to the xylose isomerase family. As to quaternary structure, homotetramer. Mg(2+) serves as cofactor.

The protein resides in the cytoplasm. The enzyme catalyses alpha-D-xylose = alpha-D-xylulofuranose. This chain is Xylose isomerase, found in Bacteroides fragilis (strain YCH46).